The following is a 238-amino-acid chain: Oil body-associated protein 1A (238 aa).

Belongs to the OBAP family. Expressed in seeds, but not in leaves or roots. Highest expression in scutellum. Detected in embryo axis and endosperm.

Its subcellular location is the lipid droplet. This chain is Oil body-associated protein 1A, found in Zea mays (Maize).